We begin with the raw amino-acid sequence, 364 residues long: 3-methyl-2-oxobutanoate hydroxymethyltransferase 1, mitochondrial (364 aa).

Residues 1 to 59 (MMMMMRRAFRHLARQQRRPLSHVPESAVYGGPRPQDVGAAAGAGAGAGATRRVTVTTLR) constitute a mitochondrion transit peptide. Mg(2+)-binding residues include Asp94 and Asp133. 3-methyl-2-oxobutanoate is bound by residues 94-95 (DS), Asp133, and Lys163. Residue Glu165 coordinates Mg(2+). Glu233 (proton acceptor) is an active-site residue.

Belongs to the PanB family. Requires Mg(2+) as cofactor.

The protein resides in the mitochondrion. The enzyme catalyses 3-methyl-2-oxobutanoate + (6R)-5,10-methylene-5,6,7,8-tetrahydrofolate + H2O = 2-dehydropantoate + (6S)-5,6,7,8-tetrahydrofolate. It functions in the pathway cofactor biosynthesis; (R)-pantothenate biosynthesis; (R)-pantoate from 3-methyl-2-oxobutanoate: step 1/2. Its function is as follows. Catalyzes the reversible reaction in which hydroxymethyl group from 5,10-methylenetetrahydrofolate is transferred onto alpha-ketoisovalerate to form ketopantoate. The protein is 3-methyl-2-oxobutanoate hydroxymethyltransferase 1, mitochondrial (KPHMT1) of Oryza sativa subsp. japonica (Rice).